We begin with the raw amino-acid sequence, 433 residues long: 28S rRNA (cytosine-C(5))-methyltransferase (433 aa).

Residues 235–241, Glu259, Asp286, and Asp304 contribute to the S-adenosyl-L-methionine site; that span reads CAAPGMK. Catalysis depends on Cys357, which acts as the Nucleophile.

Belongs to the class I-like SAM-binding methyltransferase superfamily. RsmB/NOP family.

It carries out the reaction a cytidine in 28S rRNA + S-adenosyl-L-methionine = a 5-methylcytidine in 28S rRNA + S-adenosyl-L-homocysteine + H(+). Its function is as follows. S-adenosyl-L-methionine-dependent methyltransferase that specifically methylates the C(5) position of a cytosine in 28S rRNA. The polypeptide is 28S rRNA (cytosine-C(5))-methyltransferase (Drosophila melanogaster (Fruit fly)).